Consider the following 286-residue polypeptide: Nucleotide-binding protein VC_2532 (286 aa).

8–15 (GQSGAGKS) contacts ATP. Residue 56–59 (DIRN) coordinates GTP.

It belongs to the RapZ-like family.

Displays ATPase and GTPase activities. This Vibrio cholerae serotype O1 (strain ATCC 39315 / El Tor Inaba N16961) protein is Nucleotide-binding protein VC_2532.